The following is a 380-amino-acid chain: MEDNFRNVLIILSAIVITAIFIHGLWTLRKQKNPYKLKTSKDKADPITRDFDRKGFDQDGVGQVKVKPSAENDKINLENEAVTEHFITEGIQLPDDLSKSQIIIKNDVLGDLAGQTSKAKQEELDNNSIQELDSSLEDDWFKEDNSGQFSKGELGDELTPAPAVEKVKKKPTKPKAVHIEPLYEQPVTQAKPARTPINKVSKTPSKATLKRDQIEIDFDNQMSEQAAAPKKIKTQLEPQVIILSVVMPANQQMLGAALLPSLLTLGLKYGEMNIFHRHEDNAGKGKVTFSLANIMNPGSFDLDNMENFATRGVSLFMTLPNAGDPFSVFEQMLNAAKQLAQEFNAQVLDDKRNVMTKQTEQHYLSKIREFDRKSRIALVE.

The Periplasmic segment spans residues 1-7 (MEDNFRN). The helical transmembrane segment at 8–28 (VLIILSAIVITAIFIHGLWTL) threads the bilayer. At 29–380 (RKQKNPYKLK…DRKSRIALVE (352 aa)) the chain is on the cytoplasmic side.

It belongs to the ZipA family. As to quaternary structure, interacts with FtsZ via their C-terminal domains.

The protein localises to the cell inner membrane. Essential cell division protein that stabilizes the FtsZ protofilaments by cross-linking them and that serves as a cytoplasmic membrane anchor for the Z ring. Also required for the recruitment to the septal ring of downstream cell division proteins. In Colwellia psychrerythraea (strain 34H / ATCC BAA-681) (Vibrio psychroerythus), this protein is Cell division protein ZipA.